Here is a 469-residue protein sequence, read N- to C-terminus: Beta-1,3-xylanase (469 aa).

Positions 1 to 22 (MKKLAKMISIATLGACAFSAHA) are cleaved as a signal peptide. The region spanning 23-293 (LDGKLVPNEG…LKGFTYINAD (271 aa)) is the GH26 domain. The active-site Proton donor is E138. The active-site Nucleophile is the E234. Residues 352 to 374 (DNGGDNGGDNGGDNGGDNGGDNG) are compositionally biased toward gly residues. Residues 352 to 380 (DNGGDNGGDNGGDNGGDNGGDNGGTEPPE) are disordered. A carbohydrate binding module (CBM) region spans residues 377 to 469 (EPPENCQDDF…NITFTTQVCN (93 aa)). Cystine bridges form between C382–C468 and C413–C418.

This sequence belongs to the glycosyl hydrolase 26 family.

The enzyme catalyses Random hydrolysis of (1-&gt;3)-beta-D-glycosidic linkages in (1-&gt;3)-beta-D-xylans.. Completely inhibited by CuCl(2), FeCl(3), HgCl(2) and N-bromosuccinimide. Moderately inhibited by AgCl, AlCl(3), Pb(CH(3)COO)(2) and dithiothreitol. BaCl(2), CaCl(2), KCl, MgCl(2), MnCl(2), NaCl, ZnCl(2), ethylenediaminetetraacetic acid, N-ethylmaleimide, iodoacetic acid and p-chloromercuribenzoic acid have little or no effect on activity. In terms of biological role, catalyzes the hydrolysis of beta-1,3-xylan into oligosaccharides, mainly xylotriose and xylobiose with smaller amounts of xylotetraose, xylose, xylopentaose and xylohexaose. Does not hydrolyze xylobiose, p-nitrophenyl-beta-xyloside, beta-1,4-xylan, carboxymethylcellulose, curdlan, glucomannan or beta-1,4-mannan. This chain is Beta-1,3-xylanase, found in Alcaligenes sp.